The chain runs to 500 residues: Glucose-1-phosphate adenylyltransferase large subunit, chloroplastic/amyloplastic (500 aa).

The N-terminal 33 residues, 1 to 33, are a transit peptide targeting the chloroplast; that stretch reads RASPPSESRAPLRAPQRSATRQHQARQGPRRMC. The tract at residues 1 to 47 is disordered; it reads RASPPSESRAPLRAPQRSATRQHQARQGPRRMCNGGRGPPYWTAGVT.

Belongs to the bacterial/plant glucose-1-phosphate adenylyltransferase family. In terms of assembly, heterotetramer.

Its subcellular location is the plastid. It is found in the chloroplast. The protein localises to the amyloplast. It catalyses the reaction alpha-D-glucose 1-phosphate + ATP + H(+) = ADP-alpha-D-glucose + diphosphate. It participates in glycan biosynthesis; starch biosynthesis. Insensitive to 3'phosphoglycerate and orthophosphate. Functionally, this protein plays a role in synthesis of starch. It catalyzes the synthesis of the activated glycosyl donor, ADP-glucose from Glc-1-P and ATP. In Triticum aestivum (Wheat), this protein is Glucose-1-phosphate adenylyltransferase large subunit, chloroplastic/amyloplastic (AGA.7).